The primary structure comprises 72 residues: Translation initiation factor IF-1 (72 aa).

The S1-like domain occupies 1-72 (MSKEENIEMQ…TKGRIIFRSR (72 aa)).

It belongs to the IF-1 family. Component of the 30S ribosomal translation pre-initiation complex which assembles on the 30S ribosome in the order IF-2 and IF-3, IF-1 and N-formylmethionyl-tRNA(fMet); mRNA recruitment can occur at any time during PIC assembly.

It localises to the cytoplasm. One of the essential components for the initiation of protein synthesis. Stabilizes the binding of IF-2 and IF-3 on the 30S subunit to which N-formylmethionyl-tRNA(fMet) subsequently binds. Helps modulate mRNA selection, yielding the 30S pre-initiation complex (PIC). Upon addition of the 50S ribosomal subunit IF-1, IF-2 and IF-3 are released leaving the mature 70S translation initiation complex. The sequence is that of Translation initiation factor IF-1 from Buchnera aphidicola subsp. Acyrthosiphon pisum (strain APS) (Acyrthosiphon pisum symbiotic bacterium).